The following is a 379-amino-acid chain: Homoserine O-succinyltransferase (379 aa).

An AB hydrolase-1 domain is found at 48–357; the sequence is NAVLICHALS…SAHGHDAFLM (310 aa). Ser-154 serves as the catalytic Nucleophile. Position 224 (Arg-224) interacts with substrate. Active-site residues include Asp-319 and His-352. Asp-353 is a substrate binding site.

Belongs to the AB hydrolase superfamily. MetX family. In terms of assembly, homodimer.

It is found in the cytoplasm. It carries out the reaction L-homoserine + succinyl-CoA = O-succinyl-L-homoserine + CoA. It participates in amino-acid biosynthesis; L-methionine biosynthesis via de novo pathway; O-succinyl-L-homoserine from L-homoserine: step 1/1. Functionally, transfers a succinyl group from succinyl-CoA to L-homoserine, forming succinyl-L-homoserine. The chain is Homoserine O-succinyltransferase from Neisseria meningitidis serogroup B (strain ATCC BAA-335 / MC58).